The primary structure comprises 317 residues: tRNA pseudouridine synthase B (317 aa).

Residue aspartate 47 is the Nucleophile of the active site.

It belongs to the pseudouridine synthase TruB family. Type 1 subfamily.

The enzyme catalyses uridine(55) in tRNA = pseudouridine(55) in tRNA. Responsible for synthesis of pseudouridine from uracil-55 in the psi GC loop of transfer RNAs. The polypeptide is tRNA pseudouridine synthase B (Shewanella sp. (strain MR-7)).